The primary structure comprises 719 residues: Penicillin-binding protein 1A (719 aa).

The tract at residues leucine 62–glutamate 223 is transglycosylase. The active-site Proton donor; for transglycosylase activity is glutamate 91. The transpeptidase stretch occupies residues aspartate 297 to leucine 611. The active-site Acyl-ester intermediate; for transpeptidase activity is the serine 370. The segment at alanine 652–proline 719 is disordered. Residues serine 654–proline 719 are compositionally biased toward low complexity.

In the N-terminal section; belongs to the glycosyltransferase 51 family. This sequence in the C-terminal section; belongs to the transpeptidase family. In terms of assembly, interacts with MreC in the elongasome.

It localises to the secreted. It carries out the reaction [GlcNAc-(1-&gt;4)-Mur2Ac(oyl-L-Ala-gamma-D-Glu-L-Lys-D-Ala-D-Ala)](n)-di-trans,octa-cis-undecaprenyl diphosphate + beta-D-GlcNAc-(1-&gt;4)-Mur2Ac(oyl-L-Ala-gamma-D-Glu-L-Lys-D-Ala-D-Ala)-di-trans,octa-cis-undecaprenyl diphosphate = [GlcNAc-(1-&gt;4)-Mur2Ac(oyl-L-Ala-gamma-D-Glu-L-Lys-D-Ala-D-Ala)](n+1)-di-trans,octa-cis-undecaprenyl diphosphate + di-trans,octa-cis-undecaprenyl diphosphate + H(+). It catalyses the reaction Preferential cleavage: (Ac)2-L-Lys-D-Ala-|-D-Ala. Also transpeptidation of peptidyl-alanyl moieties that are N-acyl substituents of D-alanine.. Its pathway is cell wall biogenesis; peptidoglycan biosynthesis. Cell wall formation. This is Penicillin-binding protein 1A (pbpA) from Streptococcus pneumoniae (strain ATCC BAA-255 / R6).